Here is a 270-residue protein sequence, read N- to C-terminus: Putative pyruvate, phosphate dikinase regulatory protein (270 aa).

Residue 149–156 (GVSRTSKT) coordinates ADP.

The protein belongs to the pyruvate, phosphate/water dikinase regulatory protein family. PDRP subfamily.

The catalysed reaction is N(tele)-phospho-L-histidyl/L-threonyl-[pyruvate, phosphate dikinase] + ADP = N(tele)-phospho-L-histidyl/O-phospho-L-threonyl-[pyruvate, phosphate dikinase] + AMP + H(+). It carries out the reaction N(tele)-phospho-L-histidyl/O-phospho-L-threonyl-[pyruvate, phosphate dikinase] + phosphate + H(+) = N(tele)-phospho-L-histidyl/L-threonyl-[pyruvate, phosphate dikinase] + diphosphate. In terms of biological role, bifunctional serine/threonine kinase and phosphorylase involved in the regulation of the pyruvate, phosphate dikinase (PPDK) by catalyzing its phosphorylation/dephosphorylation. The chain is Putative pyruvate, phosphate dikinase regulatory protein from Thermoanaerobacter pseudethanolicus (strain ATCC 33223 / 39E) (Clostridium thermohydrosulfuricum).